We begin with the raw amino-acid sequence, 179 residues long: RNA pyrophosphohydrolase (179 aa).

In terms of domain architecture, Nudix hydrolase spans 6-149; the sequence is GYRANVGIVI…KKPIYEDMLK (144 aa). The short motif at 38–59 is the Nudix box element; that stretch reads GGIDFGESELDALFRELNEEIG.

It belongs to the Nudix hydrolase family. RppH subfamily. A divalent metal cation is required as a cofactor.

Its function is as follows. Accelerates the degradation of transcripts by removing pyrophosphate from the 5'-end of triphosphorylated RNA, leading to a more labile monophosphorylated state that can stimulate subsequent ribonuclease cleavage. This chain is RNA pyrophosphohydrolase, found in Ruthia magnifica subsp. Calyptogena magnifica.